The sequence spans 345 residues: Mitochondrial substrate carrier family protein J (345 aa).

Over 1–31 the chain is Mitochondrial intermembrane; the sequence is MSSSHTIQETKEVHTKTNKRIQWDDLDPKRY. Solcar repeat units follow at residues 30–118, 129–217, and 255–342; these read RYYF…VKQG, DLLF…SKSK, and EDPI…VKKL. The helical transmembrane segment at 32–52 threads the bilayer; sequence YFYNFLLGGSIDLLMFPLDVI. Residues 53 to 88 are Mitochondrial matrix-facing; it reads RTRLQVQGSQNVIQSFPQYNGTFDGFKKLIRLEGKR. A helical membrane pass occupies residues 89–110; sequence ALYKGFLTSECGYLCSRAIYFG. Residues 111–129 lie on the Mitochondrial intermembrane side of the membrane; that stretch reads SYEFVKQGFLKGRSDSDSD. A helical membrane pass occupies residues 130-150; it reads LLFVTTISGAISEALASVIWV. Topologically, residues 151-191 are mitochondrial matrix; the sequence is PFDVATQSVQIQGSLSKPKYKGGSDVFKKIYGERGIKGLYK. A helical transmembrane segment spans residues 192–208; that stretch reads GFGATIIRNVPYSGIWW. Topologically, residues 209 to 257 are mitochondrial intermembrane; that stretch reads GTYEISKSKLTQFNIRQKLGLKERSSHSLAVSAEIDKNNPSHEVENEDP. Residues 258-278 form a helical membrane-spanning segment; it reads IIHFISGFFAAVFATSITNPL. The Mitochondrial matrix segment spans residues 279 to 316; the sequence is DVAKTRLQTGVFPENEKPNFYTIIKSTIRKEGIRALWK. Residues 317-337 traverse the membrane as a helical segment; it reads GLVPSLLTSTPYSMISIFLYE. The Mitochondrial intermembrane segment spans residues 338 to 345; sequence EVKKLSLK.

Belongs to the mitochondrial carrier (TC 2.A.29) family.

The protein resides in the mitochondrion inner membrane. Its function is as follows. Mitochondrial solute carriers shuttle metabolites, nucleotides, and cofactors through the mitochondrial inner membrane. This is Mitochondrial substrate carrier family protein J (mcfJ) from Dictyostelium discoideum (Social amoeba).